The following is a 271-amino-acid chain: GPN-loop GTPase 3 (271 aa).

Residue 13 to 18 (GAGKST) coordinates GTP. Positions 70–72 (GPN) match the Gly-Pro-Asn (GPN)-loop; involved in dimer interface motif. 173–176 (SKLD) provides a ligand contact to GTP.

It belongs to the GPN-loop GTPase family. Heterodimers with GPN1 or GPN2. Binds to RNA polymerase II (RNAPII).

Small GTPase required for proper nuclear import of RNA polymerase II and III (RNAPII and RNAPIII). May act at an RNAP assembly step prior to nuclear import. The sequence is that of GPN-loop GTPase 3 from Candida glabrata (strain ATCC 2001 / BCRC 20586 / JCM 3761 / NBRC 0622 / NRRL Y-65 / CBS 138) (Yeast).